The primary structure comprises 249 residues: Exosome complex component Rrp41 (249 aa).

Belongs to the RNase PH family. Rrp41 subfamily. As to quaternary structure, component of the archaeal exosome complex. Forms a hexameric ring-like arrangement composed of 3 Rrp41-Rrp42 heterodimers. The hexameric ring associates with a trimer of Rrp4 and/or Csl4 subunits.

Its subcellular location is the cytoplasm. Functionally, catalytic component of the exosome, which is a complex involved in RNA degradation. Has 3'-&gt;5' exoribonuclease activity. Can also synthesize heteromeric RNA-tails. This chain is Exosome complex component Rrp41, found in Thermococcus kodakarensis (strain ATCC BAA-918 / JCM 12380 / KOD1) (Pyrococcus kodakaraensis (strain KOD1)).